A 343-amino-acid chain; its full sequence is Aspartate beta-hydroxylase domain-containing protein 2 (343 aa).

Residues 1 to 31 (MWLEWLVAWSWSLDGLRDCIATGIQSVRDCD) are Cytoplasmic-facing. A helical transmembrane segment spans residues 32–52 (GTAVITVACLLVLFVWYCYHV). Residues 53–343 (GREQPRPHVS…ALDFIFAPGR (291 aa)) lie on the Lumenal side of the membrane. Asn77 and Asn185 each carry an N-linked (GlcNAc...) asparagine glycan. 2 residues coordinate 2-oxoglutarate: Trp202 and Ser246. Fe cation is bound at residue His257. 2-oxoglutarate is bound at residue 266–268 (RCH). His302 serves as a coordination point for Fe cation. Residue Arg315 participates in 2-oxoglutarate binding.

Belongs to the aspartyl/asparaginyl beta-hydroxylase family. It depends on Fe cation as a cofactor.

The protein resides in the membrane. Functionally, may function as 2-oxoglutarate-dependent dioxygenase. The polypeptide is Aspartate beta-hydroxylase domain-containing protein 2 (Asphd2) (Rattus norvegicus (Rat)).